A 100-amino-acid polypeptide reads, in one-letter code: Large ribosomal subunit protein uL23 (100 aa).

The protein belongs to the universal ribosomal protein uL23 family. In terms of assembly, part of the 50S ribosomal subunit. Contacts protein L29, and trigger factor when it is bound to the ribosome.

Functionally, one of the early assembly proteins it binds 23S rRNA. One of the proteins that surrounds the polypeptide exit tunnel on the outside of the ribosome. Forms the main docking site for trigger factor binding to the ribosome. This is Large ribosomal subunit protein uL23 from Kosmotoga olearia (strain ATCC BAA-1733 / DSM 21960 / TBF 19.5.1).